Reading from the N-terminus, the 323-residue chain is Transcription factor MYB56 (323 aa).

Residues 1–14 (MNPNLLEKDLRGKE) are compositionally biased toward basic and acidic residues. The interval 1 to 84 (MNPNLLEKDL…EKSLRMRGKS (84 aa)) is disordered. The segment covering 27 to 60 (NFRSLPNSHTAACKTSLNNPSISRNHPHNKSASV) has biased composition (polar residues). The segment covering 66 to 78 (EHGNERGENEKSL) has biased composition (basic and acidic residues). 2 consecutive HTH myb-type domains span residues 88-139 (TKVC…FNQL) and 140-194 (DPRI…ARRT). 2 DNA-binding regions (H-T-H motif) span residues 116-138 (WNLI…WFNQ) and 167-190 (WALI…HVIM). Residues 192 to 217 (RRTRESQRQRQQPPPTLSRDAEMTVS) form a disordered region.

In terms of assembly, forms homodimer. Interacts with the dephosphorylated active form of BES1 in the nucleus of quiescent center (QC) cells. Interacts with BPM1, BPM2, BPM3, BPM4, BPM5 and BPM6 at the promoter of FLOWERING LOCUS T (FT). As to expression, mostly expressed in flowers (at protein level) and siliques, and, to a lower extent, in roots, stems and leaves. Expressed in embryos (e.g. heart and torpedo stages) and cotyledons, and, at low levels, in roots and inflorescence. Accumulates specifically in root apical meristem quiescent center (QC) and vascular initial cells.

Its subcellular location is the nucleus. It localises to the cytoplasm. The protein resides in the cytosol. Its function is as follows. Acts as a cell-specific local repressor of quiescent center (QC) self-renewal by cell divisions in the primary root. Counteracts brassinosteroid (BR)-mediated cell division in the QC cells. Regulates maternally seed size, especially before the heart stage, promoting both endothelial cells expansion and cell number in the outer integument layer of the seed coat. Modulates the expression of genes involved in cell wall metabolism such as cell division and expansion. Negative regulator of flowering via the repression of FT transcription. The chain is Transcription factor MYB56 from Arabidopsis thaliana (Mouse-ear cress).